The chain runs to 204 residues: Inactive ribonuclease-like protein 9 (204 aa).

The signal sequence occupies residues 1–26 (MMRTPITTHPLLLLLLLQQLLQPVQF). Intrachain disulfides connect Cys97–Cys152, Cys115–Cys167, and Cys122–Cys129. N-linked (GlcNAc...) asparagine glycans are attached at residues Asn130 and Asn142.

This sequence belongs to the pancreatic ribonuclease family.

The protein resides in the secreted. Does not exhibit any ribonuclease activity. The protein is Inactive ribonuclease-like protein 9 (RNASE9) of Macaca nemestrina (Pig-tailed macaque).